The chain runs to 144 residues: Maximins 10/H15 (144 aa).

Positions 1–18 are cleaved as a signal peptide; sequence MNFKYIVAVSFLIASAYA. Positions 19–43 are excised as a propeptide; it reads RSVQNDEQSLSQRDVLEEESLREIR. At serine 70 the chain carries Serine amide. A propeptide spanning residues 74 to 123 is cleaved from the precursor; it reads TAEDHEVMKRLEAVMRDLDSLDYPEEATERETRGFNQEEIANLFTKKEKR. Residue leucine 143 is modified to Leucine amide.

Belongs to the bombinin family. In terms of tissue distribution, expressed by the skin glands.

It is found in the secreted. Functionally, maximin-10 shows antimicrobial activity against bacteria and against the fungus C.albicans. It has little hemolytic activity. Its function is as follows. Maximin-H15 shows antimicrobial activity against bacteria and against the fungus C.albicans. Shows strong hemolytic activity. The polypeptide is Maximins 10/H15 (Bombina maxima (Giant fire-bellied toad)).